The sequence spans 278 residues: Phosphate import ATP-binding protein PstB (278 aa).

One can recognise an ABC transporter domain in the interval 32–273; that stretch reads YETRDLNLWY…PSDKRTEDYI (242 aa). 64–71 is an ATP binding site; the sequence is GPSGCGKS.

It belongs to the ABC transporter superfamily. Phosphate importer (TC 3.A.1.7) family. In terms of assembly, the complex is composed of two ATP-binding proteins (PstB), two transmembrane proteins (PstC and PstA) and a solute-binding protein (PstS).

It localises to the cell membrane. It catalyses the reaction phosphate(out) + ATP + H2O = ADP + 2 phosphate(in) + H(+). Its function is as follows. Part of the ABC transporter complex PstSACB involved in phosphate import. Responsible for energy coupling to the transport system. The polypeptide is Phosphate import ATP-binding protein PstB (Halalkalibacterium halodurans (strain ATCC BAA-125 / DSM 18197 / FERM 7344 / JCM 9153 / C-125) (Bacillus halodurans)).